A 79-amino-acid chain; its full sequence is Virulence protein MsgA (79 aa).

The protein belongs to the DinI family.

Functionally, affects survival in macrophages. This Salmonella typhi protein is Virulence protein MsgA (msgA).